We begin with the raw amino-acid sequence, 147 residues long: Large ribosomal subunit protein uL13 (147 aa).

Belongs to the universal ribosomal protein uL13 family. As to quaternary structure, part of the 50S ribosomal subunit.

This protein is one of the early assembly proteins of the 50S ribosomal subunit, although it is not seen to bind rRNA by itself. It is important during the early stages of 50S assembly. The chain is Large ribosomal subunit protein uL13 from Nocardia farcinica (strain IFM 10152).